Consider the following 361-residue polypeptide: UDP-N-acetylglucosamine--N-acetylmuramyl-(pentapeptide) pyrophosphoryl-undecaprenol N-acetylglucosamine transferase (361 aa).

UDP-N-acetyl-alpha-D-glucosamine contacts are provided by Ser-199 and Gln-290.

This sequence belongs to the glycosyltransferase 28 family. MurG subfamily.

It is found in the cell membrane. It carries out the reaction Mur2Ac(oyl-L-Ala-gamma-D-Glu-L-Lys-D-Ala-D-Ala)-di-trans,octa-cis-undecaprenyl diphosphate + UDP-N-acetyl-alpha-D-glucosamine = beta-D-GlcNAc-(1-&gt;4)-Mur2Ac(oyl-L-Ala-gamma-D-Glu-L-Lys-D-Ala-D-Ala)-di-trans,octa-cis-undecaprenyl diphosphate + UDP + H(+). It participates in cell wall biogenesis; peptidoglycan biosynthesis. Functionally, cell wall formation. Catalyzes the transfer of a GlcNAc subunit on undecaprenyl-pyrophosphoryl-MurNAc-pentapeptide (lipid intermediate I) to form undecaprenyl-pyrophosphoryl-MurNAc-(pentapeptide)GlcNAc (lipid intermediate II). The chain is UDP-N-acetylglucosamine--N-acetylmuramyl-(pentapeptide) pyrophosphoryl-undecaprenol N-acetylglucosamine transferase from Streptococcus mutans serotype c (strain ATCC 700610 / UA159).